The sequence spans 319 residues: MENFPIINLEKLNGSERADTMEMIKDACENWGFFELVNHGIPHEVMDTVEKMTKGHYKKCMEQRFKELVASKGLEAVQAEVTDLDWESTFFLRHLPVSNICEVPDLDDQYREVMRDFAKRLEKLAEELLDLLCENLGLEKGYLKKIFYGTKGPNFGSKVSNYPPCPKPDLIKGLRAHTDAGGIILLFQDDKVTGLQLLKDGQWIDVPPMRLSIVVNLGDQLEVITNGKYKSVMHRVITQTDGTRMSLASFYNPGSDAVIFPAPTLVEKEAEESKAIYPKFVFDDYMKLYAGLKFQAKEPRFEAMIKAMETVKSDPVATA.

Positions 152–253 (GPNFGSKVSN…RMSLASFYNP (102 aa)) constitute a Fe2OG dioxygenase domain. Residues H177, D179, and H234 each contribute to the Fe cation site.

This sequence belongs to the iron/ascorbate-dependent oxidoreductase family. Fe cation is required as a cofactor.

It carries out the reaction 1-aminocyclopropane-1-carboxylate + L-ascorbate + O2 = ethene + L-dehydroascorbate + hydrogen cyanide + CO2 + 2 H2O. Its pathway is alkene biosynthesis; ethylene biosynthesis via S-adenosyl-L-methionine; ethylene from S-adenosyl-L-methionine: step 2/2. The protein is 1-aminocyclopropane-1-carboxylate oxidase (ACO) of Nicotiana tabacum (Common tobacco).